A 731-amino-acid polypeptide reads, in one-letter code: 1,4-alpha-glucan branching enzyme GlgB (731 aa).

Asp408 acts as the Nucleophile in catalysis. Glu461 acts as the Proton donor in catalysis.

It belongs to the glycosyl hydrolase 13 family. GlgB subfamily. In terms of assembly, monomer.

It catalyses the reaction Transfers a segment of a (1-&gt;4)-alpha-D-glucan chain to a primary hydroxy group in a similar glucan chain.. The protein operates within glycan biosynthesis; glycogen biosynthesis. In terms of biological role, catalyzes the formation of the alpha-1,6-glucosidic linkages in glycogen by scission of a 1,4-alpha-linked oligosaccharide from growing alpha-1,4-glucan chains and the subsequent attachment of the oligosaccharide to the alpha-1,6 position. In Corynebacterium efficiens (strain DSM 44549 / YS-314 / AJ 12310 / JCM 11189 / NBRC 100395), this protein is 1,4-alpha-glucan branching enzyme GlgB.